We begin with the raw amino-acid sequence, 391 residues long: Cdc42 effector protein 1 (391 aa).

Phosphoserine is present on residues Ser19 and Ser27. Residue Thr34 is modified to Phosphothreonine. In terms of domain architecture, CRIB spans 38–52; sequence ISHPLGDFRHTMHVG. Ser39 carries the phosphoserine modification. The residue at position 53 (Arg53) is an Omega-N-methylarginine. Phosphoserine is present on residues Ser65, Ser73, Ser77, Ser101, Ser113, Ser121, and Ser139. Residues 163–189 are disordered; sequence ISRLPRSEKPHDRDRDGSFPSEPGLRR. Basic and acidic residues predominate over residues 167–179; sequence PRSEKPHDRDRDG. A phosphoserine mark is found at Ser180, Ser190, Ser192, and Ser195. 8 repeat units span residues 220-226, 227-233, 234-240, 241-247, 248-254, 255-261, 262-268, and 269-275. The segment at 220–275 is 8 X 7 AA tandem repeats of [PT]-[AT]-A-[ENT]-[PT]-[PTS]-[AG]; the sequence is PAAETPAPAANPPAPTANPTGPAANPPATTANPPAPAANPSAPAATPTGPAANPPA. Residues 221–338 are disordered; it reads AAETPAPAAN…HHYPEMDARQ (118 aa). Positions 236–270 are enriched in low complexity; it reads ANPTGPAANPPATTANPPAPAANPSAPAATPTGPA. Ser303 bears the Phosphoserine mark. Over residues 327 to 338 the composition is skewed to basic and acidic residues; sequence GGHHYPEMDARQ. 2 positions are modified to phosphoserine: Ser350 and Ser353. The interval 354 to 391 is disordered; the sequence is LDEEWRAPQAGSRTPVPSTVQANTFEFADAEEDDEVKV. The segment covering 364–377 has biased composition (polar residues); sequence GSRTPVPSTVQANT. A compositionally biased stretch (acidic residues) spans 381–391; it reads ADAEEDDEVKV.

It belongs to the BORG/CEP family. Interacts with RHOQ and CDC42, in a GTP-dependent manner. Endothelial and bone marrow stromal cells.

It localises to the endomembrane system. Its subcellular location is the cytoplasm. The protein resides in the cytoskeleton. Functionally, probably involved in the organization of the actin cytoskeleton. Induced membrane extensions in fibroblasts. The polypeptide is Cdc42 effector protein 1 (CDC42EP1) (Homo sapiens (Human)).